The sequence spans 499 residues: Acetylcholine receptor subunit alpha-type acr-16 (499 aa).

Residues 1–19 (MSSVCALLLSCALFLVAHG) form the signal peptide. Over 20-232 (SLQERRLYED…LHMRRRTLYY (213 aa)) the chain is Extracellular. N43 and N93 each carry an N-linked (GlcNAc...) asparagine glycan. 2 cysteine pairs are disulfide-bonded: C147–C161 and C211–C212. Helical transmembrane passes span 233–253 (GFNL…GFTL), 261–281 (ITLQ…VSEM), and 289–309 (VPLL…STVF). At 310–473 (TVYVLNLHYR…WKFAAMVVDR (164 aa)) the chain is on the cytoplasmic side. The helical transmembrane segment at 474-494 (LCLYVFTIFIIASTIGIFWSA) threads the bilayer. Over 495-499 (PYLVA) the chain is Extracellular.

This sequence belongs to the ligand-gated ion channel (TC 1.A.9) family. Acetylcholine receptor (TC 1.A.9.1) subfamily.

The protein localises to the postsynaptic cell membrane. Its subcellular location is the cell membrane. In terms of biological role, after binding acetylcholine, the AChR responds by an extensive change in conformation that affects all subunits and leads to opening of an ion-conducting channel across the plasma membrane. A subunit of the levamisole-insensitive nicotinic receptor. The protein is Acetylcholine receptor subunit alpha-type acr-16 of Caenorhabditis briggsae.